A 112-amino-acid polypeptide reads, in one-letter code: MSDKPKRPLSAYMLWLNSARESIKRENPGIKVTEVAKRGGELWRAMKDKSEWEAKAAKAKDDYDRAVKEFEANGGSSAANGGGAKKRAKPAKKVAKKSKKEESDEDDDDESE.

A DNA-binding region (HMG box) is located at residues proline 5 to glutamate 71. Phosphoserine is present on serine 10. The residue at position 12 (tyrosine 12) is a Phosphotyrosine. A disordered region spans residues alanine 72–glutamate 112. Residues alanine 84–serine 98 are compositionally biased toward basic residues. Phosphoserine is present on residues serine 103 and serine 111. The segment covering serine 103 to glutamate 112 has biased composition (acidic residues).

It belongs to the HMGB family.

The protein localises to the nucleus. The protein resides in the chromosome. Binds preferentially single-stranded DNA and unwinds double-stranded DNA. Prefers sites containing the sequence 5'-ttg-3'. Facilitates DNA bending. Associated with early embryonic chromatin in the absence of histone H1. The protein is High mobility group protein D (HmgD) of Drosophila melanogaster (Fruit fly).